Reading from the N-terminus, the 301-residue chain is Ribosomal RNA small subunit methyltransferase A (301 aa).

S-adenosyl-L-methionine-binding residues include Asn-29, Leu-31, Gly-56, Glu-77, Asp-102, and Asn-127.

It belongs to the class I-like SAM-binding methyltransferase superfamily. rRNA adenine N(6)-methyltransferase family. RsmA subfamily.

It localises to the cytoplasm. It carries out the reaction adenosine(1518)/adenosine(1519) in 16S rRNA + 4 S-adenosyl-L-methionine = N(6)-dimethyladenosine(1518)/N(6)-dimethyladenosine(1519) in 16S rRNA + 4 S-adenosyl-L-homocysteine + 4 H(+). In terms of biological role, specifically dimethylates two adjacent adenosines (A1518 and A1519) in the loop of a conserved hairpin near the 3'-end of 16S rRNA in the 30S particle. May play a critical role in biogenesis of 30S subunits. This chain is Ribosomal RNA small subunit methyltransferase A, found in Halothermothrix orenii (strain H 168 / OCM 544 / DSM 9562).